We begin with the raw amino-acid sequence, 97 residues long: Large ribosomal subunit protein bL28 (97 aa).

This sequence belongs to the bacterial ribosomal protein bL28 family.

This chain is Large ribosomal subunit protein bL28, found in Rickettsia rickettsii (strain Iowa).